Consider the following 450-residue polypeptide: MGACLGACSLLSCASCLCGSAPCILCGCCPSTRNSTVSRLLFTSFLFLGVLVSIIMLSPGVESQLYKLPWVCEDRTQQPLVLQGPLDCGSLLGFRAVYRMCFATAAFFFFFMLLMICVRSSRDPRAAIQNGFWFFKFLILVGITVGAFYIPDGSFPKIWFYFGVVGSFLFILIQLILFVDFAHSWNQRWLCKAEECDSPAWYAGLFFFTFLFYLLSIAAVALMFVYYTESGACHEGKVFISLNLTFCVCVSIIAVLPKVQDAQPNSGLLQASVITLYTMFVTWSALSNVPDQKCNPHLPTKNGTGQVDLEDYSTVWWDAPSIVGLVIFILCTFFISLRSSDHRQVNSLMQTEECPAEMVQQQQVAVSDGRAYDNEQDGVTYSYSFFHFCLVLASLHVMMTLTNWYSPGETRKMISTWTSVWVKICASWAGLFLYLWTLVAPLLLPNRDFS.

11 consecutive transmembrane segments (helical) span residues 5-27 (LGAC…ILCG), 40-57 (LLFT…IIML), 96-118 (AVYR…MICV), 131-150 (GFWF…AFYI), 160-182 (FYFG…VDFA), 203-225 (AGLF…LMFV), 238-257 (VFIS…AVLP), 264-286 (PNSG…WSAL), 315-337 (VWWD…FISL), 380-402 (TYSY…MTLT), and 417-439 (WTSV…WTLV).

Belongs to the TDE1 family.

The protein resides in the cell membrane. The enzyme catalyses a 1,2-diacyl-sn-glycero-3-phospho-L-serine(in) = a 1,2-diacyl-sn-glycero-3-phospho-L-serine(out). The catalysed reaction is a 1,2-diacyl-sn-glycero-3-phosphocholine(in) = a 1,2-diacyl-sn-glycero-3-phosphocholine(out). It carries out the reaction a 1,2-diacyl-sn-glycero-3-phosphoethanolamine(in) = a 1,2-diacyl-sn-glycero-3-phosphoethanolamine(out). Functionally, non-ATP-dependent, non-specific lipid transporter for phosphatidylserine, phosphatidylcholine, and phosphatidylethanolamine. Functions as a scramblase that flips lipids in both directions across the membrane. In contrast to SERINC3 and SERINC5, has no effect on gammaretrovirus particles infectivity. In Mus musculus (Mouse), this protein is Serine incorporator 2 (Serinc2).